Consider the following 285-residue polypeptide: MIDLLGLDLDGTLLSKTKKINNPSKLALTNLIAKKPSLKVMILTGRSVFSTLKHVEKLNSLFKKPIVDYFCCYGGAKLYQIEANKPQERYKFCLENSVVETTFSIIKKHRGLCLAYLDSYVSPYLCLAGNKLLGWFTKYFWYRKRCVFFNQNHLKQGILKISVYFLSAKRCKKVYEILKNTFQEKVNVLSFSNNLIEITHHDANKGYAIEYMAKREQLSLNRIAVIGDSWNDYAMFKKAKYSFAMSKSPSQLKLIATNTSNKTNRYRFSTLLNLISETIINQKAD.

Asp8 (nucleophile) is an active-site residue. Position 8 (Asp8) interacts with Mg(2+). Leu9 lines the phosphate pocket. Asp10 contacts Mg(2+). Residues 44–45 (TG) and Lys205 contribute to the phosphate site. Positions 228 and 229 each coordinate Mg(2+). Asn231 contributes to the phosphate binding site.

This sequence belongs to the HAD-like hydrolase superfamily. Cof family. Mg(2+) serves as cofactor.

The sequence is that of Putative phosphatase MG125 from Mycoplasma genitalium (strain ATCC 33530 / DSM 19775 / NCTC 10195 / G37) (Mycoplasmoides genitalium).